A 224-amino-acid polypeptide reads, in one-letter code: MSKKTIVSMAVIRRLPRYHRCLEELLKNDIKRISSKELSERMGVTASQIRQDLNNFGGFGQQGYGYNVEELYNNLTKILGLDKTYNTIIIGAGNLGQAIANYTRFEKSGFNLKGIFDINPRLFGLKIRDVEVMDVEKVEEFIANNHIDIAILCIPKDNAQYTADRLVKAGIKAIWNFSPIDLKVPDDVILENVHLSDSLFTISYRLNEEELFKKLKGETVKVDG.

Residues Arg-17–Phe-56 constitute a DNA-binding region (H-T-H motif). Residue Gly-91–Gly-96 participates in NAD(+) binding.

This sequence belongs to the transcriptional regulatory Rex family. In terms of assembly, homodimer.

It localises to the cytoplasm. Its function is as follows. Modulates transcription in response to changes in cellular NADH/NAD(+) redox state. The chain is Redox-sensing transcriptional repressor Rex from Caldanaerobacter subterraneus subsp. tengcongensis (strain DSM 15242 / JCM 11007 / NBRC 100824 / MB4) (Thermoanaerobacter tengcongensis).